Reading from the N-terminus, the 808-residue chain is Quinoprotein glucose dehydrogenase (808 aa).

An N-terminal signal peptide occupies residues 1-33 (MSTTSRPGLWALITAAVFALCGAILTVGGAWVA). 4 helical membrane passes run 35–54 (IGGP…TAFL), 59–76 (NPAA…TVIW), 94–108 (IVII…PFVS), and 123–138 (GAVG…SLFT). Asp-470 serves as the catalytic Proton acceptor. Positions 514–545 (VPAPETPVPQGAAPGDHTSPTQPMSQLTLRPK) are disordered. Residues 531 to 541 (TSPTQPMSQLT) show a composition bias toward polar residues.

The protein belongs to the bacterial PQQ dehydrogenase family. The cofactor is pyrroloquinoline quinone.

The protein resides in the cell inner membrane. The enzyme catalyses a ubiquinone + D-glucose = D-glucono-1,5-lactone + a ubiquinol. This chain is Quinoprotein glucose dehydrogenase (gdh), found in Gluconobacter oxydans (strain 621H) (Gluconobacter suboxydans).